We begin with the raw amino-acid sequence, 345 residues long: Methionine import ATP-binding protein MetN 2 (345 aa).

The ABC transporter domain occupies 4–243 (IELRHVKKEF…PQTEIAKRFI (240 aa)). 40–47 (GYSGAGKS) is an ATP binding site.

Belongs to the ABC transporter superfamily. Methionine importer (TC 3.A.1.24) family. As to quaternary structure, the complex is composed of two ATP-binding proteins (MetN), two transmembrane proteins (MetI) and a solute-binding protein (MetQ).

The protein resides in the cell membrane. It carries out the reaction L-methionine(out) + ATP + H2O = L-methionine(in) + ADP + phosphate + H(+). The enzyme catalyses D-methionine(out) + ATP + H2O = D-methionine(in) + ADP + phosphate + H(+). Functionally, part of the ABC transporter complex MetNIQ involved in methionine import. Responsible for energy coupling to the transport system. The sequence is that of Methionine import ATP-binding protein MetN 2 from Enterococcus faecalis (strain ATCC 700802 / V583).